Consider the following 55-residue polypeptide: Large ribosomal subunit protein bL33 (55 aa).

The protein belongs to the bacterial ribosomal protein bL33 family.

This Maricaulis maris (strain MCS10) (Caulobacter maris) protein is Large ribosomal subunit protein bL33.